The sequence spans 359 residues: MERYELLKDIGAGNFGVARLMRNKETKELVAMKYIPRGLKIDENVAREIINHRSLRHPNIIRFKEVVVTPTHLAIVMEYAAGGELFDRICNAGRFSEDEARYFFQQLICGVSYCHFMQICHRDLKLENTLLDGSPAPRLKICDFGYSKSSLLHSKPKSTVGTPAYIAPEVLSRREYDGKTADVWSCGVTLYVMLVGAYPFEDPDDPKNFRKTIGRIMSIQYKIPEYVHVSQDCRQLLSRIFVANPAKRITIREIRNHPWFLKNLPRELTEAAQAMYYKKDNSAPTYSVQSVEEIMKIVEEARTPPRSSTPVAGFGWQEEDEQEDNSKKPEEEQEEEEDAEDEYDKQVKQVHASGEFQLS.

The Protein kinase domain occupies 4–260 (YELLKDIGAG…IREIRNHPWF (257 aa)). ATP is bound by residues 10–18 (IGAGNFGVA) and lysine 33. Aspartate 123 (proton acceptor) is an active-site residue. Residues 299-359 (EEARTPPRSS…VHASGEFQLS (61 aa)) form a disordered region. Residues 331–343 (EEQEEEEDAEDEY) are compositionally biased toward acidic residues.

Belongs to the protein kinase superfamily. Ser/Thr protein kinase family. In terms of processing, may be phosphorylated. Weakly expressed in roots. Expressed in roots of young seedlings.

It is found in the cytoplasm. It localises to the nucleus. It catalyses the reaction L-seryl-[protein] + ATP = O-phospho-L-seryl-[protein] + ADP + H(+). The enzyme catalyses L-threonyl-[protein] + ATP = O-phospho-L-threonyl-[protein] + ADP + H(+). Its activity is regulated as follows. Activated by hyperosmotic stress. May play a role in signal transduction of hyperosmotic response. The polypeptide is Serine/threonine-protein kinase SAPK7 (SAPK7) (Oryza sativa subsp. japonica (Rice)).